The following is a 440-amino-acid chain: Adenylosuccinate synthetase 1, chloroplastic (440 aa).

Residues 13-19 and 41-43 each bind GTP; these read GDEGKGK and GHT. The Proton acceptor role is filled by Asp14. Mg(2+) is bound by residues Asp14 and Gly41. IMP-binding positions include 14–17, 39–42, Thr135, Arg149, Gln230, Thr245, and Arg313; these read DEGK and NAGH. The active-site Proton donor is His42. A substrate-binding site is contributed by 309–315; the sequence is TVTRRKR. GTP contacts are provided by residues Arg315 and 341–343; that span reads KLD.

The protein belongs to the adenylosuccinate synthetase family. Homodimer. The cofactor is Mg(2+).

The protein resides in the plastid. It is found in the chloroplast. It carries out the reaction IMP + L-aspartate + GTP = N(6)-(1,2-dicarboxyethyl)-AMP + GDP + phosphate + 2 H(+). It participates in purine metabolism; AMP biosynthesis via de novo pathway; AMP from IMP: step 1/2. Its function is as follows. Plays an important role in the de novo pathway and in the salvage pathway of purine nucleotide biosynthesis. Catalyzes the first committed step in the biosynthesis of AMP from IMP. This chain is Adenylosuccinate synthetase 1, chloroplastic, found in Ricinus communis (Castor bean).